Consider the following 39-residue polypeptide: MERNPNPNNLPVELNRTSLYLGLLIVFTTGILFSSYFFN.

Residues 18–38 (SLYLGLLIVFTTGILFSSYFF) traverse the membrane as a helical segment.

The protein belongs to the PsbL family. PSII is composed of 1 copy each of membrane proteins PsbA, PsbB, PsbC, PsbD, PsbE, PsbF, PsbH, PsbI, PsbJ, PsbK, PsbL, PsbM, PsbT, PsbX, PsbY, PsbZ, Psb30/Ycf12, peripheral proteins PsbO, CyanoQ (PsbQ), PsbU, PsbV and a large number of cofactors. It forms dimeric complexes.

It is found in the cellular thylakoid membrane. Its function is as follows. One of the components of the core complex of photosystem II (PSII). PSII is a light-driven water:plastoquinone oxidoreductase that uses light energy to abstract electrons from H(2)O, generating O(2) and a proton gradient subsequently used for ATP formation. It consists of a core antenna complex that captures photons, and an electron transfer chain that converts photonic excitation into a charge separation. This subunit is found at the monomer-monomer interface and is required for correct PSII assembly and/or dimerization. In Synechococcus sp. (strain CC9311), this protein is Photosystem II reaction center protein L.